We begin with the raw amino-acid sequence, 67 residues long: Putative sodium channel alpha-toxin Acra7 (67 aa).

An LCN-type CS-alpha/beta domain is found at 2–66 (RDGYIVKPTN…PIKDPNQDCT (65 aa)). 4 cysteine pairs are disulfide-bonded: Cys12–Cys65, Cys16–Cys37, Cys23–Cys47, and Cys27–Cys49. Position 67 (Arg67) is a propeptide, removed by a carboxypeptidase.

It belongs to the long (4 C-C) scorpion toxin superfamily. Sodium channel inhibitor family. Alpha subfamily. Expressed by the venom gland.

The protein localises to the secreted. In terms of biological role, alpha toxins bind voltage-independently at site-3 of sodium channels (Nav) and inhibit the inactivation of the activated channels, thereby blocking neuronal transmission. This Androctonus crassicauda (Arabian fat-tailed scorpion) protein is Putative sodium channel alpha-toxin Acra7.